The following is a 320-amino-acid chain: MAVQKYTMALFLAVALVAGPAAPTPPTPRTPPLLPPPRARDKATLTSRSVEDINAASRRPWWASVPPADKFKTFADHVLCVPNADVTSAATKAPQLKAKLDAAYRVAYEAAEGSTPEAKYDAFIAALTEALRVIAGAFEVHAVKPATEEVVADPVGELQIVDKIDAAFKIAATAANSAPANDKFTVFEGAFNKAIKESTAGAYETYKFIPSLEAAVKQAYGATVARAPEVKYAVFEAGLTKAITAMSEAQKVAKPPLSPQPPQVLPLAAGGAATVAAASDVRVCRSHGTLQDACLLRCRGGCQPVVWRGGSHRARGGYKV.

Residues 1-23 (MAVQKYTMALFLAVALVAGPAAP) form the signal peptide. The segment at 21-45 (AAPTPPTPRTPPLLPPPRARDKATL) is disordered. Residues 22 to 37 (APTPPTPRTPPLLPPP) are compositionally biased toward pro residues.

The protein belongs to the Poa p IX/Phl p VI allergen family.

The sequence is that of Major pollen allergen Pha a 5.1 from Phalaris aquatica (Canary grass).